A 955-amino-acid polypeptide reads, in one-letter code: MITSAAGIISLLDEEEPQLKEFALHKLNAVVNDFWAEISESVDKIEVLYEDEGFRSRQFAALVASKVFYHLGAFEESLNYALGAGDLFNVNDNSEYVETIIAKCIDHYTKQCVENAELPEGEKKPVDERLEGIVNKMFQRCLDDHKYKQAIGIALETRRLDIFEKTILESNDVPGMLAYSLKLCMSLMQNKQFRNKVLRVLVKIYMNLEKPDFINVCQCLIFLDDPQAVSDILEKLVKEDNLLMAYQICFDLYESASQQFLSSVIQNLRTVGTPIASVPGSTNTGTVPGSEKDSDAMEAEEKPGSTCVGKSAEINPEPKDQISKMIKILSGEMAIELHLQFLIRNNNTDLMILKNTKDAVRNSVCHTATVIANSFMHCGTTSDQFLRDNLEWLARATNWAKFTATASLGVIHKGHEKEALQLMATYLPKDTSPGSAYQEGGGLYALGLIHANHGGDIIDYLLNQLKNASNDIVRHGGSLGLGLAAMGTARQDVYDLLKTNLYQDDAVTGEAAGLALGLVMLGSKNAQAIEDMVGYAQETQHEKILRGLAVGIALVMYGRMEEADALIESLCRDKDPILRRSGMYTVAMAYCGSGNNKAIRRLLHVAVSDVNDDVRRAAVESLGFILFRTPEQCPSVVSLLSESYNPHVRYGAAMALGICCAGTGNKEAINLLEPMTNDPVNYVRQGALIASALIMIQQTEITCPKVSQFRQLYSKVINDKHDDVMAKFGAILAQGILDAGGHNVIISLQSRTGHTHMPSVVGVLVFTQFWFWFPLSHFLSLAFTPTCVIGLNKDLKMPKVQYKSNCKPSTFAYPPPLEVPKEKEKEKVSTAVLSITAKAKKKEKEKEKEKKEEEKMEVDETEKKDEKEKKKEPEPNFQLLDNPARVMPAQLKVLTMTESCRYQPFKPLSIGGIIILKDTSEDMEELVEPVAAHGPKIEEEEQEPEPPEPFEYIDD.

The tract at residues 279-313 (PGSTNTGTVPGSEKDSDAMEAEEKPGSTCVGKSAE) is disordered. Over residues 290–303 (SEKDSDAMEAEEKP) the composition is skewed to basic and acidic residues. 10 PC repeats span residues 403-436 (TATA…PGSA), 441-474 (GGLY…DIVR), 476-510 (GGSL…VTGE), 511-545 (AAGL…EKIL), 547-580 (GLAV…ILRR), 581-616 (SGMY…DVRR), 617-649 (AAVE…PHVR), 651-685 (GAAM…YVRQ), 686-726 (GALI…DVMA), and 729-761 (GAIL…PSVV). Disordered stretches follow at residues 839–879 (AKKK…NFQL) and 932–955 (AHGP…YIDD). Basic and acidic residues-rich tracts occupy residues 842-854 (KEKE…KEEE) and 861-874 (TEKK…KEPE). Over residues 938-955 (EEEEQEPEPPEPFEYIDD) the composition is skewed to acidic residues.

The protein belongs to the proteasome subunit S1 family. In terms of assembly, component of the 19S proteasome regulatory particle complex. The 26S proteasome consists of a 20S core particle (CP) and two 19S regulatory subunits (RP). The regulatory particle is made of a lid composed of 9 subunits, a base containing 6 ATPases and few additional components including PSMD1. Interacts with ADRM1.

Component of the 26S proteasome, a multiprotein complex involved in the ATP-dependent degradation of ubiquitinated proteins. This complex plays a key role in the maintenance of protein homeostasis by removing misfolded or damaged proteins, which could impair cellular functions, and by removing proteins whose functions are no longer required. Therefore, the proteasome participates in numerous cellular processes, including cell cycle progression, apoptosis, or DNA damage repair. The protein is 26S proteasome non-ATPase regulatory subunit 1 (PSMD1) of Gallus gallus (Chicken).